The primary structure comprises 788 residues: MSLRILLVGNGGREHALAWKLAQSPLVERIFVAPGNGGTDNPQGKIENIAIGSSQKDFAKLVEFAQSKDVGLVIPGPEQPLVEGIETHFRKVGIPVFGPSEKAAVMEGSKTFSKDFMKKHNIPTAAFENFTDYNKAVDYVKKVGHRVVIKASGLAAGKGVLIPTSTEEAIAAVKEVMQDKAFGEAGDEVVIEEFLEGDELSILAFSDGYTVVDMPPAQDHKRIGDGDQGLNTGGMGAYCPAPIGTPALLQEIKESILQPTIDGMRRDGIPFVGMLFTGIMLTPDGKPKVLEYNVRFGDPETQTILPLLSDDTDLAEVMLACVERRLDAVTLRVKPDAHAVTVVMSAGGYPESYKKGDAITVGGLPEQTYIFHAGTASENGQVITAGGRVIASTAVAPTLKDAVAQAYKGADAVEFNGKYNRKDIAYKAFRDAEKTSGGITYAQAGVSIDNGNKLVQQIKEKVKSTARPGTDSVIGGFGGLFDLKAAGFRDPLLVGATDGVGTKLKIAQSIDKHDTVGIDLVAMNVNDLVVQGAEPLVFLDYYATGKLDVNAAAAFVGGVADGCIQAGCALIGGETAEMPGIYYGNDYDANGTSIGAVERDAVLPRMDEIAKGDAILGLASSGVHSNGFSLVRKIIEHAGLTYTDACPWDQSKSLGEALLTPTRIYVKQLLPVINAKLTSALAHITGGGLVENIPRILPENYSAKIDVSTWPLPPVFQWLGKAGNVPKEDISKTLNMGIGMILVVKQEKVAEVTQLLEKVGEKVYQIGEIVPDNDVDEKTVLINTENWY.

Positions 1–429 are GARS; that stretch reads MSLRILLVGN…NRKDIAYKAF (429 aa). Positions 114-323 constitute an ATP-grasp domain; sequence KDFMKKHNIP…LAEVMLACVE (210 aa). 140 to 201 contributes to the ATP binding site; sequence VKKVGHRVVI…EEFLEGDELS (62 aa). Residues Glu-291 and Asn-293 each contribute to the Mg(2+) site. Positions 439–752 are AIRS; the sequence is ITYAQAGVSI…VVKQEKVAEV (314 aa).

This sequence in the N-terminal section; belongs to the GARS family. In the C-terminal section; belongs to the AIR synthase family. The cofactor is Mg(2+). Requires Mn(2+) as cofactor.

The protein resides in the cytoplasm. The protein localises to the cytosol. It carries out the reaction 5-phospho-beta-D-ribosylamine + glycine + ATP = N(1)-(5-phospho-beta-D-ribosyl)glycinamide + ADP + phosphate + H(+). The enzyme catalyses 2-formamido-N(1)-(5-O-phospho-beta-D-ribosyl)acetamidine + ATP = 5-amino-1-(5-phospho-beta-D-ribosyl)imidazole + ADP + phosphate + H(+). It functions in the pathway purine metabolism; IMP biosynthesis via de novo pathway; 5-amino-1-(5-phospho-D-ribosyl)imidazole from N(2)-formyl-N(1)-(5-phospho-D-ribosyl)glycinamide: step 2/2. Its pathway is purine metabolism; IMP biosynthesis via de novo pathway; N(1)-(5-phospho-D-ribosyl)glycinamide from 5-phospho-alpha-D-ribose 1-diphosphate: step 2/2. Its function is as follows. Catalyzes the second and fifth step in the 'de novo' purine biosynthesis pathway; contains phosphoribosylamine--glycine ligase (GARS) and phosphoribosylformylglycinamidine cyclo-ligase (AIRS) activities. The chain is Bifunctional purine biosynthetic protein ADE1 from Yarrowia lipolytica (strain CLIB 122 / E 150) (Yeast).